The sequence spans 1987 residues: Transcriptional activator DEMETER (1987 aa).

Disordered stretches follow at residues 246 to 378 (TGHE…NKSP), 392 to 415 (DLEN…SSGA), and 793 to 901 (MPPE…GPSG). Residues 258–277 (SMQSIMDSSAVNATEATEQN) show a composition bias toward polar residues. Over residues 341–364 (ATQEKVKSKETGSAKKKNLKESAT) the composition is skewed to basic and acidic residues. Residues 813–829 (NTASISKGASKGNSSPV) are compositionally biased toward polar residues. A compositionally biased stretch (basic residues) spans 844–855 (PAKKGRAGRKKS). Positions 955-1054 (KVDIDDETTR…AFMSLAARFP (100 aa)) are DEMETER. 2 disordered regions span residues 1324-1351 (LPGM…QDEM) and 1439-1471 (TLAD…KNNM). Basic and acidic residues-rich tracts occupy residues 1338–1351 (EHQD…QDEM) and 1452–1469 (SLRK…RNKN). Positions 1629, 1636, 1639, and 1645 each coordinate [4Fe-4S] cluster.

The protein belongs to the DNA glycosylase family. DEMETER subfamily. [4Fe-4S] cluster is required as a cofactor. Mainly expressed in immature flower buds, then decreases as the flower matures. Expressed in the ovule carpels, but not expressed in pollen stamens. Expressed in developing and mature ovules (stages 12-14), then strongly decreases after fertilization.

The protein localises to the nucleus. Transcriptional activator involved in gene imprinting. Catalyzes the release of 5-methylcytosine (5-meC) from DNA by a glycosylase/lyase mechanism. Allows the expression of the maternal copy of the imprinted MEA gene before fertilization, possibly by antagonizing or suppressing DNA methylation on target promoter. Probably acts by nicking the MEA promoter. Required for stable reproducible patterns of floral and vegetative development. The chain is Transcriptional activator DEMETER (DME) from Arabidopsis thaliana (Mouse-ear cress).